A 31-amino-acid chain; its full sequence is Cytochrome b6-f complex subunit 6 (31 aa).

Residues 3-23 form a helical membrane-spanning segment; the sequence is ILISYFCFLLVFFLFTLILFI.

It belongs to the PetL family. As to quaternary structure, the 4 large subunits of the cytochrome b6-f complex are cytochrome b6, subunit IV (17 kDa polypeptide, PetD), cytochrome f and the Rieske protein, while the 4 small subunits are PetG, PetL, PetM and PetN. The complex functions as a dimer.

The protein localises to the plastid. It localises to the chloroplast thylakoid membrane. In terms of biological role, component of the cytochrome b6-f complex, which mediates electron transfer between photosystem II (PSII) and photosystem I (PSI), cyclic electron flow around PSI, and state transitions. PetL is important for photoautotrophic growth as well as for electron transfer efficiency and stability of the cytochrome b6-f complex. The chain is Cytochrome b6-f complex subunit 6 from Welwitschia mirabilis (Tree tumbo).